A 230-amino-acid polypeptide reads, in one-letter code: Lipoprotein-releasing system ATP-binding protein LolD (230 aa).

The region spanning 10 to 228 (LRAEHLSKVY…QLHMANGRLL (219 aa)) is the ABC transporter domain. Position 46-53 (46-53 (GASGSGKS)) interacts with ATP.

The protein belongs to the ABC transporter superfamily. Lipoprotein translocase (TC 3.A.1.125) family. As to quaternary structure, the complex is composed of two ATP-binding proteins (LolD) and two transmembrane proteins (LolC and LolE).

The protein localises to the cell inner membrane. In terms of biological role, part of the ABC transporter complex LolCDE involved in the translocation of mature outer membrane-directed lipoproteins, from the inner membrane to the periplasmic chaperone, LolA. Responsible for the formation of the LolA-lipoprotein complex in an ATP-dependent manner. This Bordetella avium (strain 197N) protein is Lipoprotein-releasing system ATP-binding protein LolD.